Consider the following 468-residue polypeptide: ATP synthase subunit beta (468 aa).

155-162 (GGAGVGKT) provides a ligand contact to ATP.

It belongs to the ATPase alpha/beta chains family. As to quaternary structure, F-type ATPases have 2 components, CF(1) - the catalytic core - and CF(0) - the membrane proton channel. CF(1) has five subunits: alpha(3), beta(3), gamma(1), delta(1), epsilon(1). CF(0) has three main subunits: a(1), b(2) and c(9-12). The alpha and beta chains form an alternating ring which encloses part of the gamma chain. CF(1) is attached to CF(0) by a central stalk formed by the gamma and epsilon chains, while a peripheral stalk is formed by the delta and b chains.

It is found in the cell membrane. The enzyme catalyses ATP + H2O + 4 H(+)(in) = ADP + phosphate + 5 H(+)(out). Produces ATP from ADP in the presence of a proton gradient across the membrane. The catalytic sites are hosted primarily by the beta subunits. This chain is ATP synthase subunit beta, found in Streptococcus mutans serotype c (strain ATCC 700610 / UA159).